The primary structure comprises 142 residues: Bacilliredoxin ABC2448 (142 aa).

It belongs to the bacilliredoxin family.

The polypeptide is Bacilliredoxin ABC2448 (Shouchella clausii (strain KSM-K16) (Alkalihalobacillus clausii)).